The sequence spans 364 residues: Lipoyl synthase, chloroplastic (364 aa).

A chloroplast-targeting transit peptide spans 1–70 (MEQTLFNPSI…PNVKKPEWLR (70 aa)). The span at 32-52 (STNSPSSNTKTTTVTVPSKKT) shows a compositional bias: low complexity. Residues 32 to 64 (STNSPSSNTKTTTVTVPSKKTMGPYTGRDPNVK) are disordered. C95, C100, C106, C126, C130, C133, and S341 together coordinate [4Fe-4S] cluster. Residues 109 to 330 (GGGDGIATAT…KEYGESIGFR (222 aa)) form the Radical SAM core domain.

It belongs to the radical SAM superfamily. Lipoyl synthase family. It depends on [4Fe-4S] cluster as a cofactor.

The protein resides in the plastid. It is found in the chloroplast. It catalyses the reaction [[Fe-S] cluster scaffold protein carrying a second [4Fe-4S](2+) cluster] + N(6)-octanoyl-L-lysyl-[protein] + 2 oxidized [2Fe-2S]-[ferredoxin] + 2 S-adenosyl-L-methionine + 4 H(+) = [[Fe-S] cluster scaffold protein] + N(6)-[(R)-dihydrolipoyl]-L-lysyl-[protein] + 4 Fe(3+) + 2 hydrogen sulfide + 2 5'-deoxyadenosine + 2 L-methionine + 2 reduced [2Fe-2S]-[ferredoxin]. Its pathway is protein modification; protein lipoylation via endogenous pathway; protein N(6)-(lipoyl)lysine from octanoyl-[acyl-carrier-protein]: step 2/2. In terms of biological role, catalyzes the radical-mediated insertion of two sulfur atoms into the C-6 and C-8 positions of the octanoyl moiety bound to the lipoyl domains of lipoate-dependent enzymes, thereby converting the octanoylated domains into lipoylated derivatives. This is Lipoyl synthase, chloroplastic from Ricinus communis (Castor bean).